The primary structure comprises 469 residues: MNPNQKIITIGSVSLTIATVCFLMQTAILVTTVTLHFKQYECDSPASNQVMPCEPIIIERNITEIVYLNNTTIEKEICPKVVEYRNWSKPQCQITGFAPFSKDNSIRLSAGGDIWVTREPYVSCDHGKCYQFALGQGTTLDNKHSNDTIHDRIPHRTLLMNELGVPFHLGTRQVCIAWSSSSCHDGKAWLHVCITGDDKNATASFIYDGRLVDSIGSWSQNILRTQESECVCINGTCTVVMTDGSASGRADTRILFIEEGKIVHISPLSGSAQHVEECSCYPRYPGVRCICRDNWKGSNRPVVDINMEDYSIDSSYVCSGLVGDTPRNDDRSSNSNCRNPNNERGNQGVKGWAFDNGDDVWMGRTISKDLRSGYETFKVIGGWSTPNSKSQINRQVIVDSDNRSGYSGIFSVEGKSCINRCFYVELIRGRKQEARVWWTSNSIVVFCGTSGTYGTGSWPDGANINFMPI.

Residues Met-1–Lys-6 lie on the Intravirion side of the membrane. The chain crosses the membrane as a helical span at residues Ile-7 to Leu-29. Residues Gly-11–Val-33 form an involved in apical transport and lipid raft association region. Over Val-30 to Ile-469 the chain is Virion surface. The interval His-36–Pro-90 is hypervariable stalk region. N-linked (GlcNAc...) asparagine; by host glycans are attached at residues Asn-61, Asn-69, Asn-70, and Asn-86. A head of neuraminidase region spans residues Gln-91–Ile-469. 8 disulfide bridges follow: Cys-92-Cys-417, Cys-124-Cys-129, Cys-183-Cys-230, Cys-232-Cys-237, Cys-278-Cys-291, Cys-280-Cys-289, Cys-318-Cys-337, and Cys-421-Cys-447. Arg-118 contacts substrate. Asn-146 carries an N-linked (GlcNAc...) asparagine; by host glycan. The Proton donor/acceptor role is filled by Asp-151. Residue Arg-152 coordinates substrate. N-linked (GlcNAc...) asparagine; by host glycans are attached at residues Asn-200 and Asn-234. Position 276–277 (Glu-276–Glu-277) interacts with substrate. Arg-292 serves as a coordination point for substrate. 3 residues coordinate Ca(2+): Asp-293, Gly-297, and Asp-324. The tract at residues Asp-324–Lys-350 is disordered. Residues Ser-333–Asn-342 are compositionally biased toward low complexity. Position 371 (Arg-371) interacts with substrate. N-linked (GlcNAc...) asparagine; by host glycosylation is present at Asn-402. Residue Tyr-406 is the Nucleophile of the active site.

Belongs to the glycosyl hydrolase 34 family. As to quaternary structure, homotetramer. It depends on Ca(2+) as a cofactor. In terms of processing, N-glycosylated.

Its subcellular location is the virion membrane. It is found in the host apical cell membrane. The enzyme catalyses Hydrolysis of alpha-(2-&gt;3)-, alpha-(2-&gt;6)-, alpha-(2-&gt;8)- glycosidic linkages of terminal sialic acid residues in oligosaccharides, glycoproteins, glycolipids, colominic acid and synthetic substrates.. With respect to regulation, inhibited by the neuraminidase inhibitors zanamivir (Relenza) and oseltamivir (Tamiflu). These drugs interfere with the release of progeny virus from infected cells and are effective against all influenza strains. Resistance to neuraminidase inhibitors is quite rare. Catalyzes the removal of terminal sialic acid residues from viral and cellular glycoconjugates. Cleaves off the terminal sialic acids on the glycosylated HA during virus budding to facilitate virus release. Additionally helps virus spread through the circulation by further removing sialic acids from the cell surface. These cleavages prevent self-aggregation and ensure the efficient spread of the progeny virus from cell to cell. Otherwise, infection would be limited to one round of replication. Described as a receptor-destroying enzyme because it cleaves a terminal sialic acid from the cellular receptors. May facilitate viral invasion of the upper airways by cleaving the sialic acid moieties on the mucin of the airway epithelial cells. Likely to plays a role in the budding process through its association with lipid rafts during intracellular transport. May additionally display a raft-association independent effect on budding. Plays a role in the determination of host range restriction on replication and virulence. Sialidase activity in late endosome/lysosome traffic seems to enhance virus replication. In Influenza A virus (strain A/Northern Territory/60/1968 H3N2) (Influenza A virus (strain NT60)), this protein is Neuraminidase.